The sequence spans 240 residues: Probable septum site-determining protein MinC (240 aa).

This sequence belongs to the MinC family. As to quaternary structure, interacts with MinD and FtsZ.

In terms of biological role, cell division inhibitor that blocks the formation of polar Z ring septums. Rapidly oscillates between the poles of the cell to destabilize FtsZ filaments that have formed before they mature into polar Z rings. Prevents FtsZ polymerization. This Acinetobacter baumannii (strain ACICU) protein is Probable septum site-determining protein MinC.